A 48-amino-acid chain; its full sequence is NLVQFKTLIMKIAGRSVVYKYFYYGCYCGWGGIGQPRDATDRCCFVHD.

The Ca(2+) site is built by tyrosine 27, glycine 29, and glycine 31. An intrachain disulfide couples cysteine 28 to cysteine 44. Histidine 47 is a catalytic residue. Aspartate 48 provides a ligand contact to Ca(2+).

It belongs to the phospholipase A2 family. Group II subfamily. D49 sub-subfamily. In terms of assembly, monomer. Ca(2+) serves as cofactor. In terms of tissue distribution, expressed by the venom gland.

The protein resides in the secreted. It catalyses the reaction a 1,2-diacyl-sn-glycero-3-phosphocholine + H2O = a 1-acyl-sn-glycero-3-phosphocholine + a fatty acid + H(+). Its activity is regulated as follows. Inhibited by EDTA. Inhibited by Ba(2+), Cu(+), Fe(2+) and Zn(2+) ions and, to a lesser extent, by Mn(2+) and Mg(2+) ions. Its function is as follows. Snake venom phospholipase A2 (PLA2) that shows myotoxicity and induces paw edema in mice. Exhibits indirect hemolytic activity. Inhibits platelet aggregation induced by ADP and collagen. PLA2 catalyzes the calcium-dependent hydrolysis of the 2-acyl groups in 3-sn-phosphoglycerides. The chain is Acidic phospholipase A2 from Bothrops pauloensis (Neuwied's lancehead).